Reading from the N-terminus, the 81-residue chain is ATP synthase subunit c (81 aa).

2 consecutive transmembrane segments (helical) span residues 3-23 and 57-77; these read PLIA…GAIG and LAFM…LLFA.

The protein belongs to the ATPase C chain family. In terms of assembly, F-type ATPases have 2 components, F(1) - the catalytic core - and F(0) - the membrane proton channel. F(1) has five subunits: alpha(3), beta(3), gamma(1), delta(1), epsilon(1). F(0) has four main subunits: a(1), b(1), b'(1) and c(10-14). The alpha and beta chains form an alternating ring which encloses part of the gamma chain. F(1) is attached to F(0) by a central stalk formed by the gamma and epsilon chains, while a peripheral stalk is formed by the delta, b and b' chains.

The protein localises to the cellular thylakoid membrane. Functionally, f(1)F(0) ATP synthase produces ATP from ADP in the presence of a proton or sodium gradient. F-type ATPases consist of two structural domains, F(1) containing the extramembraneous catalytic core and F(0) containing the membrane proton channel, linked together by a central stalk and a peripheral stalk. During catalysis, ATP synthesis in the catalytic domain of F(1) is coupled via a rotary mechanism of the central stalk subunits to proton translocation. Key component of the F(0) channel; it plays a direct role in translocation across the membrane. A homomeric c-ring of between 10-14 subunits forms the central stalk rotor element with the F(1) delta and epsilon subunits. The protein is ATP synthase subunit c of Trichodesmium erythraeum (strain IMS101).